The sequence spans 104 residues: UPF0473 protein SH1304 (104 aa).

The protein belongs to the UPF0473 family.

The sequence is that of UPF0473 protein SH1304 from Staphylococcus haemolyticus (strain JCSC1435).